Reading from the N-terminus, the 609-residue chain is Dihydroxy-acid dehydratase 1 (609 aa).

Asp-81 provides a ligand contact to Mg(2+). Cys-122 provides a ligand contact to [2Fe-2S] cluster. Mg(2+) is bound by residues Asp-123 and Lys-124. Lys-124 carries the post-translational modification N6-carboxylysine. Cys-195 contributes to the [2Fe-2S] cluster binding site. Glu-491 is a Mg(2+) binding site. Catalysis depends on Ser-517, which acts as the Proton acceptor.

This sequence belongs to the IlvD/Edd family. As to quaternary structure, homodimer. It depends on [2Fe-2S] cluster as a cofactor. Requires Mg(2+) as cofactor.

The catalysed reaction is (2R)-2,3-dihydroxy-3-methylbutanoate = 3-methyl-2-oxobutanoate + H2O. The enzyme catalyses (2R,3R)-2,3-dihydroxy-3-methylpentanoate = (S)-3-methyl-2-oxopentanoate + H2O. The protein operates within amino-acid biosynthesis; L-isoleucine biosynthesis; L-isoleucine from 2-oxobutanoate: step 3/4. It functions in the pathway amino-acid biosynthesis; L-valine biosynthesis; L-valine from pyruvate: step 3/4. Functions in the biosynthesis of branched-chain amino acids. Catalyzes the dehydration of (2R,3R)-2,3-dihydroxy-3-methylpentanoate (2,3-dihydroxy-3-methylvalerate) into 2-oxo-3-methylpentanoate (2-oxo-3-methylvalerate) and of (2R)-2,3-dihydroxy-3-methylbutanoate (2,3-dihydroxyisovalerate) into 2-oxo-3-methylbutanoate (2-oxoisovalerate), the penultimate precursor to L-isoleucine and L-valine, respectively. This Acinetobacter baylyi (strain ATCC 33305 / BD413 / ADP1) protein is Dihydroxy-acid dehydratase 1.